A 101-amino-acid chain; its full sequence is NAD(P)H-quinone oxidoreductase subunit 4L (101 aa).

The next 3 helical transmembrane spans lie at 3-23 (LQYFLLIAAALFCIGVYGLVT), 30-50 (VLMSIELMLNAVNLNLMAFSN), and 64-84 (IFVITIAAAEAAVGLAIVLAI).

This sequence belongs to the complex I subunit 4L family. In terms of assembly, NDH-1 can be composed of about 15 different subunits; different subcomplexes with different compositions have been identified which probably have different functions.

The protein localises to the cellular thylakoid membrane. It carries out the reaction a plastoquinone + NADH + (n+1) H(+)(in) = a plastoquinol + NAD(+) + n H(+)(out). The enzyme catalyses a plastoquinone + NADPH + (n+1) H(+)(in) = a plastoquinol + NADP(+) + n H(+)(out). Functionally, NDH-1 shuttles electrons from an unknown electron donor, via FMN and iron-sulfur (Fe-S) centers, to quinones in the respiratory and/or the photosynthetic chain. The immediate electron acceptor for the enzyme in this species is believed to be plastoquinone. Couples the redox reaction to proton translocation, and thus conserves the redox energy in a proton gradient. Cyanobacterial NDH-1 also plays a role in inorganic carbon-concentration. The protein is NAD(P)H-quinone oxidoreductase subunit 4L of Leptolyngbya boryana (Plectonema boryanum).